The chain runs to 344 residues: Arginine N-succinyltransferase (344 aa).

Position 125 (Leu125) interacts with succinyl-CoA. Residue His229 is the Proton donor of the active site.

This sequence belongs to the arginine N-succinyltransferase family.

The enzyme catalyses succinyl-CoA + L-arginine = N(2)-succinyl-L-arginine + CoA + H(+). Its pathway is amino-acid degradation; L-arginine degradation via AST pathway; L-glutamate and succinate from L-arginine: step 1/5. Its function is as follows. Catalyzes the transfer of succinyl-CoA to arginine to produce N(2)-succinylarginine. The polypeptide is Arginine N-succinyltransferase (Shigella boydii serotype 4 (strain Sb227)).